The primary structure comprises 191 residues: dCTP deaminase (191 aa).

Residues 112–117 (KSTYAR), 136–138 (TLE), glutamine 157, tyrosine 173, and glutamine 183 contribute to the dCTP site. Glutamate 138 (proton donor/acceptor) is an active-site residue.

Belongs to the dCTP deaminase family. Homotrimer.

It carries out the reaction dCTP + H2O + H(+) = dUTP + NH4(+). The protein operates within pyrimidine metabolism; dUMP biosynthesis; dUMP from dCTP (dUTP route): step 1/2. Functionally, catalyzes the deamination of dCTP to dUTP. This Psychrobacter cryohalolentis (strain ATCC BAA-1226 / DSM 17306 / VKM B-2378 / K5) protein is dCTP deaminase.